The sequence spans 229 residues: MKPPIILINYKAYENSYGEKGVEISKKIEKVSKDYGVPIIISVPATMIYKLSQILEIPVYAQHVDALRHGAHTGAILPEMIKDAGAKGSLLNHSERKIRLDEIHEAVTRIRDLGLESVVCADSYELVHPLALLKPNAILIEPPELIGSGRAVSKEKPEVITRAVNEIKKVEGVYLIAGAGITTGEDVYKAIELGADGIGVASAVMKSSTPEKIVEDFIINALKAIDRKK.

Substrate is bound at residue 9–11 (NYK). The active-site Electrophile is H93. The active-site Proton acceptor is E141. Substrate-binding positions include I146, G180, and 201-202 (AS).

It belongs to the triosephosphate isomerase family. As to quaternary structure, homotetramer; dimer of dimers.

The protein resides in the cytoplasm. The catalysed reaction is D-glyceraldehyde 3-phosphate = dihydroxyacetone phosphate. It participates in carbohydrate biosynthesis; gluconeogenesis. The protein operates within carbohydrate degradation; glycolysis; D-glyceraldehyde 3-phosphate from glycerone phosphate: step 1/1. Its function is as follows. Involved in the gluconeogenesis. Catalyzes stereospecifically the conversion of dihydroxyacetone phosphate (DHAP) to D-glyceraldehyde-3-phosphate (G3P). This chain is Triosephosphate isomerase, found in Sulfurisphaera tokodaii (strain DSM 16993 / JCM 10545 / NBRC 100140 / 7) (Sulfolobus tokodaii).